The following is a 522-amino-acid chain: Subtilisin-like protease 10 (522 aa).

The N-terminal stretch at 1–19 (MFFFKGVVAVLSFFSAVNA) is a signal peptide. The propeptide occupies 20 to 117 (APFMKPNNGT…VERDQIGTSQ (98 aa)). Residues 36–113 (SYIVLLKRDI…HVAHVERDQI (78 aa)) enclose the Inhibitor I9 domain. Residues 127 to 405 (NWGLGRLSNN…KLLVNGANGT (279 aa)) enclose the Peptidase S8 domain. Catalysis depends on charge relay system residues aspartate 159 and histidine 190. Asparagine 251 is a glycosylation site (N-linked (GlcNAc...) asparagine). Residue serine 348 is the Charge relay system of the active site. Residues 384 to 397 (ASVKNPGPNTTNKL) are compositionally biased toward polar residues. The disordered stretch occupies residues 384–515 (ASVKNPGPNT…GWNRPMWWNR (132 aa)). N-linked (GlcNAc...) asparagine glycans are attached at residues asparagine 392 and asparagine 403. A compositionally biased stretch (pro residues) spans 432–459 (SQNPPPGQNPPPGQNPPPEQPAPSPPAN).

It belongs to the peptidase S8 family.

Its subcellular location is the secreted. Functionally, secreted subtilisin-like serine protease with keratinolytic activity that contributes to pathogenicity. The polypeptide is Subtilisin-like protease 10 (SUB10) (Arthroderma benhamiae (strain ATCC MYA-4681 / CBS 112371) (Trichophyton mentagrophytes)).